Reading from the N-terminus, the 494-residue chain is Hydroxyneurosporene desaturase (494 aa).

Belongs to the carotenoid/retinoid oxidoreductase family.

The enzyme catalyses rhodopin + A = (3E)-3,4-didehydrorhodopin + AH2. It functions in the pathway carotenoid biosynthesis; spheroidene biosynthesis. Functionally, catalyzes the introduction of C-3,4 double bonds into 1-hydroxyneurosporene (1-HO-Neu) to yield demethylspheroidene (DMS). This is Hydroxyneurosporene desaturase (crtD) from Rhodobacter capsulatus (strain ATCC BAA-309 / NBRC 16581 / SB1003).